The sequence spans 311 residues: Giardin subunit alpha-8 (311 aa).

4 Annexin repeats span residues 5–73 (RKAY…IRCW), 75–146 (NRHE…DRWM), 154–223 (NNVK…AAHY), and 227–295 (EPSK…SLWR).

Belongs to the annexin family. Giardin subunit alpha subfamily.

It is found in the cytoplasm. Its subcellular location is the cytoskeleton. Functionally, giardins are involved in parasite attachment to the intestinal mucosa and in the cytoskeletal disassembly and reassembly that marks the transition from infectious trophozoite to transmissible cyst. They may interact with other cytoskeletal proteins such as microtubules in the microribbons or crossbridges, to maintain the integrity of the ventral disk. The sequence is that of Giardin subunit alpha-8 from Giardia intestinalis (Giardia lamblia).